Here is a 346-residue protein sequence, read N- to C-terminus: N-acetyl-gamma-glutamyl-phosphate reductase (346 aa).

Residue Cys150 is part of the active site.

It belongs to the NAGSA dehydrogenase family. Type 1 subfamily.

The protein localises to the cytoplasm. It carries out the reaction N-acetyl-L-glutamate 5-semialdehyde + phosphate + NADP(+) = N-acetyl-L-glutamyl 5-phosphate + NADPH + H(+). Its pathway is amino-acid biosynthesis; L-arginine biosynthesis; N(2)-acetyl-L-ornithine from L-glutamate: step 3/4. Its function is as follows. Catalyzes the NADPH-dependent reduction of N-acetyl-5-glutamyl phosphate to yield N-acetyl-L-glutamate 5-semialdehyde. The sequence is that of N-acetyl-gamma-glutamyl-phosphate reductase from Acetivibrio thermocellus (strain ATCC 27405 / DSM 1237 / JCM 9322 / NBRC 103400 / NCIMB 10682 / NRRL B-4536 / VPI 7372) (Clostridium thermocellum).